The chain runs to 121 residues: Basic phospholipase A2 BbTX-III (121 aa).

Ca(2+) contacts are provided by Y27, G29, and G31. 6 cysteine pairs are disulfide-bonded: C28–C44, C43–C95, C49–C121, C50–C88, C58–C82, and C76–C86. H47 is a catalytic residue. Ca(2+) is bound at residue D48. The active site involves D89.

It belongs to the phospholipase A2 family. Group II subfamily. D49 sub-subfamily. In terms of assembly, homodimer; non-covalently linked. Ca(2+) serves as cofactor. Expressed by the venom gland.

It is found in the secreted. The enzyme catalyses a 1,2-diacyl-sn-glycero-3-phosphocholine + H2O = a 1-acyl-sn-glycero-3-phosphocholine + a fatty acid + H(+). Snake venom phospholipase A2 (PLA2) that exhibits myotoxin and anticoagulant activity. Displays edema-inducing activities in mouse paw. Also displays cytotoxic activity against some cell lines and myotubes, and antimicrobial activities against E.coli, C.albicans and Leishmania. PLA2 catalyzes the calcium-dependent hydrolysis of the 2-acyl groups in 3-sn-phosphoglycerides. The chain is Basic phospholipase A2 BbTX-III from Bothrops brazili (Brazil's lancehead).